The following is a 593-amino-acid chain: Early nodule-specific protein 2 (593 aa).

Over residues 71–110 (EKPPIYEPPPTEEPPPVYKPPIIHPPPNYKPPAHTPPIYH) the composition is skewed to pro residues. Positions 71–593 (EKPPIYEPPP…GHYPPYKKNQ (523 aa)) are disordered. Basic and acidic residues-rich tracts occupy residues 123-138 (PYEKPPHEEPPREYQP) and 166-195 (PPYEKPPPEYQPPHHEKPPPEYQPPHEKPP). Positions 196–210 (PEYTPPYEKPPPEYQ) are enriched in pro residues. 2 stretches are compositionally biased toward basic and acidic residues: residues 227-265 (PPHEKPPHEHPPPEYQPPHEKPPHEHPPPEYQPPHEKPP) and 275-292 (PPHEHPPPEYQPPHEKPP). Residues 294 to 306 (VHPPPEYQPPYLK) show a composition bias toward pro residues. 4 stretches are compositionally biased toward basic and acidic residues: residues 339–350 (PPHEKPPHEHPP), 360–372 (PPPEHQPPHENPP), 382–394 (PPHEKPPHYEHPP), and 404–421 (PPPEYKPPHEKPPHEHPP). Pro residues predominate over residues 422–435 (PEYQPPQENPPPEY). A compositionally biased stretch (basic and acidic residues) spans 506 to 522 (PRHEKPMPKYQPPHEKL). The segment covering 532 to 558 (KTPPPQAYHPPPPIYHHPPFHPPPHVK) has biased composition (pro residues).

This sequence belongs to the nodulin 75 family.

Functionally, involved in early stages of root nodule development. This Medicago truncatula (Barrel medic) protein is Early nodule-specific protein 2.